The sequence spans 1381 residues: Serine-aspartate repeat-containing protein D (1381 aa).

The first 35 residues, 1-35 (MLNRENKTAITRKGMVSNRLNKFSIRKYTVGTASI), serve as a signal peptide directing secretion. The YSIRK-G/S signaling motif signature appears at 23-34 (FSIRKYTVGTAS). Residues 36 to 568 (LVGTTLIFGL…NNQSGGAGQE (533 aa)) form a ligand binding A region region. Positions 54–185 (ESTNKELNEA…NKKVDAKTES (132 aa)) are disordered. Polar residues-rich tracts occupy residues 62–71 (EATTSASDNQ) and 94–108 (EMVS…SNGN). Over residues 130–145 (KSDEQASPKSTNEDLN) the composition is skewed to basic and acidic residues. Polar residues-rich tracts occupy residues 146 to 155 (TKQTISNQEA) and 163 to 173 (NKSVVNVQPTN). The segment covering 174–183 (EENKKVDAKT) has biased composition (basic and acidic residues). CNA-B domains follow at residues 569 to 680 (VYKI…IYKP), 681 to 791 (KYNL…YKTP), 792 to 901 (KYNL…FYKP), 902 to 1012 (TYNL…YKTP), and 1013 to 1123 (KYSL…EEET). Disordered stretches follow at residues 857 to 883 (ETPS…TSTT), 972 to 992 (YTPT…GLTT), and 1078 to 1357 (EKPA…SNNA). Polar residues-rich tracts occupy residues 860-869 (SGYTPTQVGS) and 972-981 (YTPTSVTSGN). Composition is skewed to acidic residues over residues 1091-1101 (TEDDKDADGGE), 1118-1134 (YYEE…DSDS), 1142-1164 (SDSD…DSDS), and 1172-1320 (SDSD…DSDS). The short motif at 1344–1348 (LPETG) is the LPXTG sorting signal element. T1347 carries the post-translational modification Pentaglycyl murein peptidoglycan amidated threonine. The propeptide at 1348-1381 (GNENSGSNNATLFGGLFAALGSLLLFGRRKKQNK) is removed by sortase.

It belongs to the serine-aspartate repeat-containing protein (SDr) family. In terms of assembly, interacts with host DSG1; this interaction increases S.aureus adherence to keratinocytes.

The protein resides in the secreted. The protein localises to the cell wall. In terms of biological role, cell surface-associated calcium-binding protein which plays an important role in adhesion and pathogenesis. Mediates interactions with components of the extracellular matrix such as host DSG1 to promote bacterial adhesion to host cells. Contributes to the resistance to killing by innate immune components such as neutrophils present in blood and thus attenuates bacterial clearance. This Staphylococcus aureus (strain USA300) protein is Serine-aspartate repeat-containing protein D (sdrD).